The sequence spans 234 residues: MRDEIFKEPISKQFEFDDFVASVFDDMISRSVPFYDVSSNLNAKLLAKILPKSAKVCDLGCSTANSLLLLNNLRNDLVLSGVDNSEAMLANAKNKAKAYGASINFILADITECELAGFDAVLANYTLQFIRPPKRADLVQKIYNGLNENGVFLFSEKIIFEDKKLTKSVIEIYEDYKQAQGYSRYEIAQKREALENVLVPYTEEENRNLALNAGFKRVESTFKWGNFMSFLAFK.

Residues Y35, 60–62 (GCS), 83–84 (DN), 109–110 (DI), N124, and R191 contribute to the S-adenosyl-L-methionine site.

The protein belongs to the class I-like SAM-binding methyltransferase superfamily. Cx-SAM synthase family. In terms of assembly, homodimer.

It carries out the reaction prephenate + S-adenosyl-L-methionine = carboxy-S-adenosyl-L-methionine + 3-phenylpyruvate + H2O. Its function is as follows. Catalyzes the conversion of S-adenosyl-L-methionine (SAM) to carboxy-S-adenosyl-L-methionine (Cx-SAM). This Campylobacter concisus (strain 13826) protein is Carboxy-S-adenosyl-L-methionine synthase.